Consider the following 358-residue polypeptide: Glutamate--cysteine ligase (358 aa).

This sequence belongs to the glutamate--cysteine ligase type 2 family. YbdK subfamily.

It catalyses the reaction L-cysteine + L-glutamate + ATP = gamma-L-glutamyl-L-cysteine + ADP + phosphate + H(+). In terms of biological role, catalyzes the synthesis of gamma-glutamylcysteine (gamma-GC), the main low-molecular-weight thiol compound instead of glutathione in halophilic archaea. This Haloferax volcanii (strain ATCC 29605 / DSM 3757 / JCM 8879 / NBRC 14742 / NCIMB 2012 / VKM B-1768 / DS2) (Halobacterium volcanii) protein is Glutamate--cysteine ligase.